Here is a 247-residue protein sequence, read N- to C-terminus: Orotidine 5'-phosphate decarboxylase (247 aa).

Residues Asp16, Lys38, 66-75 (DLKFHDIPNT), Thr130, Arg191, Gln200, Gly220, and Arg221 contribute to the substrate site. Lys68 acts as the Proton donor in catalysis.

It belongs to the OMP decarboxylase family. Type 1 subfamily. Homodimer.

The catalysed reaction is orotidine 5'-phosphate + H(+) = UMP + CO2. It functions in the pathway pyrimidine metabolism; UMP biosynthesis via de novo pathway; UMP from orotate: step 2/2. Its function is as follows. Catalyzes the decarboxylation of orotidine 5'-monophosphate (OMP) to uridine 5'-monophosphate (UMP). The protein is Orotidine 5'-phosphate decarboxylase of Rhodospirillum rubrum (strain ATCC 11170 / ATH 1.1.1 / DSM 467 / LMG 4362 / NCIMB 8255 / S1).